Here is a 437-residue protein sequence, read N- to C-terminus: tRNA-2-methylthio-N(6)-dimethylallyladenosine synthase (437 aa).

The region spanning 1-115 (MKVYIETMGC…ISQVIHKEKA (115 aa)) is the MTTase N-terminal domain. The [4Fe-4S] cluster site is built by C10, C46, C78, C148, C152, and C155. One can recognise a Radical SAM core domain in the interval 134 to 367 (KKAQIRSLLN…QNRHKEILEE (234 aa)). The TRAM domain occupies 370 to 436 (KLEVGKTHVV…KGRLIAAIKG (67 aa)).

This sequence belongs to the methylthiotransferase family. MiaB subfamily. As to quaternary structure, monomer. [4Fe-4S] cluster is required as a cofactor.

It is found in the cytoplasm. The catalysed reaction is N(6)-dimethylallyladenosine(37) in tRNA + (sulfur carrier)-SH + AH2 + 2 S-adenosyl-L-methionine = 2-methylsulfanyl-N(6)-dimethylallyladenosine(37) in tRNA + (sulfur carrier)-H + 5'-deoxyadenosine + L-methionine + A + S-adenosyl-L-homocysteine + 2 H(+). In terms of biological role, catalyzes the methylthiolation of N6-(dimethylallyl)adenosine (i(6)A), leading to the formation of 2-methylthio-N6-(dimethylallyl)adenosine (ms(2)i(6)A) at position 37 in tRNAs that read codons beginning with uridine. In Helicobacter pylori (strain HPAG1), this protein is tRNA-2-methylthio-N(6)-dimethylallyladenosine synthase.